The primary structure comprises 360 residues: Photosystem II protein D1 (360 aa).

Helical transmembrane passes span Y30 to T47, H119 to L134, and W143 to A157. Chlorophyll a is bound at residue H119. Y127 serves as a coordination point for pheophytin a. [CaMn4O5] cluster-binding residues include D171 and E190. A helical membrane pass occupies residues F198–L219. A chlorophyll a-binding site is contributed by H199. A quinone contacts are provided by residues H216 and S265–F266. H216 lines the Fe cation pocket. H273 contributes to the Fe cation binding site. A helical transmembrane segment spans residues F275–M289. Residues H333, E334, D343, and A345 each coordinate [CaMn4O5] cluster. A propeptide spanning residues A346 to G360 is cleaved from the precursor.

It belongs to the reaction center PufL/M/PsbA/D family. As to quaternary structure, PSII is composed of 1 copy each of membrane proteins PsbA, PsbB, PsbC, PsbD, PsbE, PsbF, PsbH, PsbI, PsbJ, PsbK, PsbL, PsbM, PsbT, PsbX, PsbY, Psb30/Ycf12, peripheral proteins PsbO, CyanoQ (PsbQ), PsbU, PsbV and a large number of cofactors. It forms dimeric complexes. The cofactor is The D1/D2 heterodimer binds P680, chlorophylls that are the primary electron donor of PSII, and subsequent electron acceptors. It shares a non-heme iron and each subunit binds pheophytin, quinone, additional chlorophylls, carotenoids and lipids. D1 provides most of the ligands for the Mn4-Ca-O5 cluster of the oxygen-evolving complex (OEC). There is also a Cl(-1) ion associated with D1 and D2, which is required for oxygen evolution. The PSII complex binds additional chlorophylls, carotenoids and specific lipids.. Post-translationally, tyr-162 forms a radical intermediate that is referred to as redox-active TyrZ, YZ or Y-Z. C-terminally processed by CtpA; processing is essential to allow assembly of the oxygen-evolving complex and thus photosynthetic growth.

The protein resides in the cellular thylakoid membrane. The enzyme catalyses 2 a plastoquinone + 4 hnu + 2 H2O = 2 a plastoquinol + O2. In terms of biological role, photosystem II (PSII) is a light-driven water:plastoquinone oxidoreductase that uses light energy to abstract electrons from H(2)O, generating O(2) and a proton gradient subsequently used for ATP formation. It consists of a core antenna complex that captures photons, and an electron transfer chain that converts photonic excitation into a charge separation. The D1/D2 (PsbA/PsbD) reaction center heterodimer binds P680, the primary electron donor of PSII as well as several subsequent electron acceptors. The sequence is that of Photosystem II protein D1 from Prochlorococcus marinus (strain NATL1A).